Here is an 803-residue protein sequence, read N- to C-terminus: Translation initiation factor IF-2 (803 aa).

2 disordered regions span residues 93–123 (TKPVVEQKRETEPAPTQEVPPTSDTTNLNEK) and 138–206 (EVKE…ASAK). Residues 111 to 121 (VPPTSDTTNLN) show a composition bias toward polar residues. Residues 138 to 155 (EVKEEAKKTPSEKKETPK) are compositionally biased toward basic and acidic residues. Over residues 156-167 (KGPRKETRRSRK) the composition is skewed to basic residues. Over residues 168-188 (PDKEDKWEREELHMTKLVEER) the composition is skewed to basic and acidic residues. A tr-type G domain is found at 302–471 (PRAPVVTIMG…LLQAEVLELK (170 aa)). The interval 311 to 318 (GHVDHGKT) is G1. 311–318 (GHVDHGKT) contributes to the GTP binding site. The G2 stretch occupies residues 336–340 (GITQH). The segment at 357 to 360 (DTPG) is G3. GTP is bound by residues 357–361 (DTPGH) and 411–414 (NKID). The tract at residues 411 to 414 (NKID) is G4. Positions 447–449 (SAK) are G5.

The protein belongs to the TRAFAC class translation factor GTPase superfamily. Classic translation factor GTPase family. IF-2 subfamily.

The protein resides in the cytoplasm. In terms of biological role, one of the essential components for the initiation of protein synthesis. Protects formylmethionyl-tRNA from spontaneous hydrolysis and promotes its binding to the 30S ribosomal subunits. Also involved in the hydrolysis of GTP during the formation of the 70S ribosomal complex. The chain is Translation initiation factor IF-2 from Coxiella burnetii (strain RSA 493 / Nine Mile phase I).